A 154-amino-acid chain; its full sequence is Ribonuclease H (154 aa).

The RNase H type-1 domain maps to 1–142; that stretch reads MRKQVEIFTD…CDELARAAAS (142 aa). The Mg(2+) site is built by Asp-10, Glu-48, Asp-70, and Asp-134.

The protein belongs to the RNase H family. In terms of assembly, monomer. Mg(2+) is required as a cofactor.

It is found in the cytoplasm. It catalyses the reaction Endonucleolytic cleavage to 5'-phosphomonoester.. In terms of biological role, endonuclease that specifically degrades the RNA of RNA-DNA hybrids. The chain is Ribonuclease H from Pectobacterium atrosepticum (strain SCRI 1043 / ATCC BAA-672) (Erwinia carotovora subsp. atroseptica).